The sequence spans 243 residues: DNA repair protein RecO (243 aa).

The protein belongs to the RecO family.

In terms of biological role, involved in DNA repair and RecF pathway recombination. The polypeptide is DNA repair protein RecO (Xylella fastidiosa (strain M12)).